Reading from the N-terminus, the 343-residue chain is NADP-dependent alkenal double bond reductase P2 (343 aa).

Positions 52 and 79 each coordinate substrate. Residues 164 to 167 (GAVG), Lys-190, Tyr-206, Asn-230, 252 to 258 (CGMISQY), 282 to 284 (FVV), and Asn-332 contribute to the NADP(+) site.

This sequence belongs to the NADP-dependent oxidoreductase L4BD family. As to quaternary structure, homodimer.

The catalysed reaction is an n-alkanal + NAD(+) = an alk-2-enal + NADH + H(+). It carries out the reaction an n-alkanal + NADP(+) = an alk-2-enal + NADPH + H(+). Catalyzes the reduction of the 7-8 double bond of phenylpropanal substrates, such as p-coumaryl aldehyde and coniferyl aldehyde (in vitro). Has activity towards toxic substrates, such as 4-hydroxy-(2E)-nonenal (in vitro). May play a distinct role in plant antioxidant defense and is possibly involved in NAD(P)/NAD(P)h homeostasis. The chain is NADP-dependent alkenal double bond reductase P2 (P2) from Arabidopsis thaliana (Mouse-ear cress).